A 250-amino-acid polypeptide reads, in one-letter code: Peptidyl-tRNA hydrolase, mitochondrial (250 aa).

A mitochondrion-targeting transit peptide spans 1-45 (MRLLSGASASRIPCPLLSLARARARCLPVPASATACRAASSSAAA). Tyr68 is a binding site for tRNA. The active-site Proton acceptor is His73. The tRNA site is built by Phe118, Asn120, and Asn166.

This sequence belongs to the PTH family.

It is found in the mitochondrion. It catalyses the reaction an N-acyl-L-alpha-aminoacyl-tRNA + H2O = an N-acyl-L-amino acid + a tRNA + H(+). The natural substrate for this enzyme may be peptidyl-tRNAs which drop off the ribosome during protein synthesis. This is Peptidyl-tRNA hydrolase, mitochondrial from Oryza sativa subsp. japonica (Rice).